The sequence spans 409 residues: Argininosuccinate synthase (409 aa).

Residues 15–23 and A42 each bind ATP; that span reads AYSGGLDTS. 2 residues coordinate L-citrulline: Y93 and S98. G123 is a binding site for ATP. L-aspartate is bound by residues T125, N129, and D130. N129 serves as a coordination point for L-citrulline. L-citrulline-binding residues include R133, S182, S191, E267, and Y279.

Belongs to the argininosuccinate synthase family. Type 1 subfamily. Homotetramer.

The protein resides in the cytoplasm. The catalysed reaction is L-citrulline + L-aspartate + ATP = 2-(N(omega)-L-arginino)succinate + AMP + diphosphate + H(+). The protein operates within amino-acid biosynthesis; L-arginine biosynthesis; L-arginine from L-ornithine and carbamoyl phosphate: step 2/3. This chain is Argininosuccinate synthase, found in Desulfitobacterium hafniense (strain Y51).